A 229-amino-acid chain; its full sequence is Rab-like protein 2A (229 aa).

Residues 28 to 35 (GDSAVGKS), 76 to 80 (DTAGQ), and 133 to 136 (NKID) contribute to the GTP site. The interval 200 to 229 (NLEQEEEDVPDQEQSGSIETPSEEVASPHS) is disordered.

Belongs to the small GTPase superfamily. Rab family. In terms of assembly, interacts with IFT27, IFT81, IFT172, ATP6V1E1, HK1, LDHC, MAPRE1 and HSPA2.

In terms of biological role, plays an essential role in male fertility, sperm intra-flagellar transport, and tail assembly. Binds, in a GTP-regulated manner, to a specific set of effector proteins including key proteins involved in cilia development and function and delivers them into the growing sperm tail. The protein is Rab-like protein 2A (RABL2A) of Pongo abelii (Sumatran orangutan).